A 169-amino-acid polypeptide reads, in one-letter code: Peptide deformylase (169 aa).

2 residues coordinate Fe cation: cysteine 91 and histidine 133. Residue glutamate 134 is part of the active site. A Fe cation-binding site is contributed by histidine 137.

The protein belongs to the polypeptide deformylase family. Fe(2+) serves as cofactor.

It catalyses the reaction N-terminal N-formyl-L-methionyl-[peptide] + H2O = N-terminal L-methionyl-[peptide] + formate. Its function is as follows. Removes the formyl group from the N-terminal Met of newly synthesized proteins. Requires at least a dipeptide for an efficient rate of reaction. N-terminal L-methionine is a prerequisite for activity but the enzyme has broad specificity at other positions. The polypeptide is Peptide deformylase (Erwinia tasmaniensis (strain DSM 17950 / CFBP 7177 / CIP 109463 / NCPPB 4357 / Et1/99)).